An 86-amino-acid polypeptide reads, in one-letter code: MKTLLLTLAVVTMVCMDLGYTTICYNHLSRTPETTEICPDSWYFCYKISLADGNDVRIKRGCTFTCPELRPTGKYVYCCRRDKCNQ.

Positions 1-21 (MKTLLLTLAVVTMVCMDLGYT) are cleaved as a signal peptide. 4 disulfides stabilise this stretch: Cys-24–Cys-45, Cys-38–Cys-62, Cys-66–Cys-78, and Cys-79–Cys-84.

The protein belongs to the three-finger toxin family. Short-chain subfamily. Orphan group VIII (haditoxin) sub-subfamily. As to quaternary structure, homodimer; non-covalently linked. In terms of tissue distribution, expressed by the venom gland.

It localises to the secreted. Antagonist of muscle and neuronal nicotinic acetylcholine receptors (nAChR) with highest affinity for neuronal alpha-7/CHRNA7 nAChRs. This is Muscarinic toxin-like protein from Bungarus multicinctus (Many-banded krait).